A 360-amino-acid polypeptide reads, in one-letter code: Peptide chain release factor 1 (360 aa).

At Gln-235 the chain carries N5-methylglutamine. Positions 285-295 (AQQASEASTRK) are enriched in polar residues. The segment at 285-305 (AQQASEASTRKSLIGSGDRSD) is disordered.

This sequence belongs to the prokaryotic/mitochondrial release factor family. Methylated by PrmC. Methylation increases the termination efficiency of RF1.

It is found in the cytoplasm. In terms of biological role, peptide chain release factor 1 directs the termination of translation in response to the peptide chain termination codons UAG and UAA. The protein is Peptide chain release factor 1 of Thiobacillus denitrificans (strain ATCC 25259 / T1).